A 241-amino-acid polypeptide reads, in one-letter code: Uridylate kinase (241 aa).

9-10 (GS) serves as a coordination point for ATP. A UMP-binding site is contributed by glycine 44. ATP-binding residues include glycine 45 and arginine 49. UMP is bound by residues aspartate 66 and 114–120 (IMPGQTT). Threonine 140, tyrosine 146, and aspartate 149 together coordinate ATP.

Belongs to the UMP kinase family. In terms of assembly, homohexamer.

It localises to the cytoplasm. The catalysed reaction is UMP + ATP = UDP + ADP. It functions in the pathway pyrimidine metabolism; CTP biosynthesis via de novo pathway; UDP from UMP (UMPK route): step 1/1. Its activity is regulated as follows. Inhibited by UTP. Functionally, catalyzes the reversible phosphorylation of UMP to UDP. The protein is Uridylate kinase of Haloquadratum walsbyi (strain DSM 16790 / HBSQ001).